We begin with the raw amino-acid sequence, 156 residues long: Small ribosomal subunit protein uS7 (156 aa).

The protein belongs to the universal ribosomal protein uS7 family. In terms of assembly, part of the 30S ribosomal subunit. Contacts proteins S9 and S11.

In terms of biological role, one of the primary rRNA binding proteins, it binds directly to 16S rRNA where it nucleates assembly of the head domain of the 30S subunit. Is located at the subunit interface close to the decoding center, probably blocks exit of the E-site tRNA. This chain is Small ribosomal subunit protein uS7, found in Frankia alni (strain DSM 45986 / CECT 9034 / ACN14a).